Here is a 430-residue protein sequence, read N- to C-terminus: MGQSVVVLGAQWGDEGKGKIVDLLTEEIGAVVRFQGGHNAGHTLVINGKKTVLHLIPSGILRDDALCLIGNGVVISPAALQKEIAELETSGVEVRSRLKISPAAPLIMPYHIALDQARERAAGGKAIGTTGRGIGPAYEDKVARRGIRIADLHYPKQLEELLRTALDYHNFVLTNYLKTDAVDFQKTFDEALAFGEYVQPMKSDVAGILHDLRKQGKRVLFEGAQGALLDIDHGTYPYVTSSNTTVGGALAGAGVGADSIDYVLGIAKAYATRVGGGPFPTELDDEIGQGIRDRGAEYGASTGRPRRCGWMDIVALKRAVAINGISGLCITKLDVLDGMEKLKVCIAYEYNGKRTEYAPLDAQGWEECTPVYLEFPGWTENTHGITNWDDLPPAARAYLRSLEELAGCPISIVSTGPDRDHTMVLQDPFA.

Residues 13 to 19 (GDEGKGK) and 41 to 43 (GHT) contribute to the GTP site. Asp-14 acts as the Proton acceptor in catalysis. The Mg(2+) site is built by Asp-14 and Gly-41. IMP-binding positions include 14–17 (DEGK), 39–42 (NAGH), Thr-130, Arg-144, Gln-225, Thr-240, and Arg-304. The active-site Proton donor is His-42. A substrate-binding site is contributed by 300 to 306 (ASTGRPR). GTP contacts are provided by residues Arg-306, 332 to 334 (KLD), and 414 to 416 (STG).

The protein belongs to the adenylosuccinate synthetase family. As to quaternary structure, homodimer. Mg(2+) is required as a cofactor.

The protein resides in the cytoplasm. The catalysed reaction is IMP + L-aspartate + GTP = N(6)-(1,2-dicarboxyethyl)-AMP + GDP + phosphate + 2 H(+). Its pathway is purine metabolism; AMP biosynthesis via de novo pathway; AMP from IMP: step 1/2. Functionally, plays an important role in the de novo pathway of purine nucleotide biosynthesis. Catalyzes the first committed step in the biosynthesis of AMP from IMP. This Stenotrophomonas maltophilia (strain R551-3) protein is Adenylosuccinate synthetase.